The sequence spans 58 residues: Large ribosomal subunit protein bL32 (58 aa).

The disordered stretch occupies residues 1–24; sequence MAVPKKKTSKSKRDKRKATWKRKA.

The protein belongs to the bacterial ribosomal protein bL32 family.

This Synechococcus sp. (strain ATCC 27144 / PCC 6301 / SAUG 1402/1) (Anacystis nidulans) protein is Large ribosomal subunit protein bL32.